The following is a 432-amino-acid chain: MEKLIILGAQWGDEGKGKIVDLLSEHFDITVRYQGGSNAGHTVVVNSQKFILHLLPTGILHEHVKGVIAQGMVVDLEVLHKEVKNLEEKGIYVKERLFISDRAHLVMPYHKLLDSLFEKKKGIGTTLRGIGPAYMFKYGRKGIRISDLKDEKRFYTLLEDNLDFVKNICEKVFCEKFDLDINQIYEEQLRYFEEFKENVVDLLRFFNTQKGSVLFEGAQGTLLDVDMGTYPYVTSSNASALGLSNGTGMPPKYFSDAFFLGVAKAYTTRVGEGPFPTELKGEEGEKLRELGGEYGSTTGRPRRCGWLDLVALKYAVQVNGLDGFVITKLDVLDTFDEVKVCVAYELDGEVIDYFPASYSELIRVKPVYKTLKGWKKSTKGAKDVSELPKEALDYVKFIEEYTGVPVVMLSTGPKRDEYIWLKEILRTRSGYS.

GTP contacts are provided by residues 12-18 (GDEGKGK) and 40-42 (GHT). The active-site Proton acceptor is the Asp13. 2 residues coordinate Mg(2+): Asp13 and Gly40. Residues 13 to 16 (DEGK), 38 to 41 (NAGH), Thr126, Arg140, Gln219, Thr234, and Arg300 contribute to the IMP site. Residue His41 is the Proton donor of the active site. Residue 296-302 (STTGRPR) coordinates substrate. GTP-binding positions include Arg302, 328–330 (KLD), and 410–412 (STG).

It belongs to the adenylosuccinate synthetase family. In terms of assembly, homodimer. It depends on Mg(2+) as a cofactor.

It localises to the cytoplasm. The enzyme catalyses IMP + L-aspartate + GTP = N(6)-(1,2-dicarboxyethyl)-AMP + GDP + phosphate + 2 H(+). The protein operates within purine metabolism; AMP biosynthesis via de novo pathway; AMP from IMP: step 1/2. Plays an important role in the de novo pathway of purine nucleotide biosynthesis. Catalyzes the first committed step in the biosynthesis of AMP from IMP. The chain is Adenylosuccinate synthetase from Aquifex aeolicus (strain VF5).